A 148-amino-acid polypeptide reads, in one-letter code: MALYEHVLLARQDISQQQVDALVEQFKGVLEANGGKFGKVENWGLRPLTYRIKKNRKAYYTLVNIDAPAAAVAEMERQMRINEDVLRFLTVRVEEHEEGQSAMLTRRDDRRERDGDDRPRRREGGFDRGDRGDRSPRRPRDNEAGEGA.

Residues 96-148 are disordered; that stretch reads HEEGQSAMLTRRDDRRERDGDDRPRRREGGFDRGDRGDRSPRRPRDNEAGEGA.

The protein belongs to the bacterial ribosomal protein bS6 family.

In terms of biological role, binds together with bS18 to 16S ribosomal RNA. In Brucella suis (strain ATCC 23445 / NCTC 10510), this protein is Small ribosomal subunit protein bS6.